A 743-amino-acid polypeptide reads, in one-letter code: Coiled-coil domain-containing protein 30 (743 aa).

Basic and acidic residues-rich tracts occupy residues 1 to 22 and 133 to 193; these read MSQE…REKQ and SPKE…MKPE. 4 disordered regions span residues 1–25, 114–193, 208–233, and 695–715; these read MSQE…QLAS, ENIC…MKPE, SLLQ…GDKL, and SKEA…LVCS. Coiled-coil stretches lie at residues 21-98 and 165-580; these read KQLA…QLNH and REGQ…LIHS. Residues 208 to 223 are compositionally biased toward low complexity; sequence SLLQSQSSGDSSDDSG.

Belongs to the prefoldin subunit beta family.

This is Coiled-coil domain-containing protein 30 (CCDC30) from Macaca fascicularis (Crab-eating macaque).